The chain runs to 484 residues: Probable cobyric acid synthase (484 aa).

In terms of domain architecture, GATase cobBQ-type spans 247 to 433 (ELHIQIVKLP…LHGIFHNFAF (187 aa)). The Nucleophile role is filled by cysteine 325. Histidine 425 is a catalytic residue.

It belongs to the CobB/CobQ family. CobQ subfamily.

The protein operates within cofactor biosynthesis; adenosylcobalamin biosynthesis. Functionally, catalyzes amidations at positions B, D, E, and G on adenosylcobyrinic A,C-diamide. NH(2) groups are provided by glutamine, and one molecule of ATP is hydrogenolyzed for each amidation. The protein is Probable cobyric acid synthase of Thermococcus onnurineus (strain NA1).